A 20-amino-acid polypeptide reads, in one-letter code: Cytochrome c oxidase subunit 6A1, mitochondrial (20 aa).

It belongs to the cytochrome c oxidase subunit 6A family. Component of the cytochrome c oxidase (complex IV, CIV), a multisubunit enzyme composed of 14 subunits. The complex is composed of a catalytic core of 3 subunits MT-CO1, MT-CO2 and MT-CO3, encoded in the mitochondrial DNA, and 11 supernumerary subunits COX4I, COX5A, COX5B, COX6A, COX6B, COX6C, COX7A, COX7B, COX7C, COX8 and NDUFA4, which are encoded in the nuclear genome. The complex exists as a monomer or a dimer and forms supercomplexes (SCs) in the inner mitochondrial membrane with NADH-ubiquinone oxidoreductase (complex I, CI) and ubiquinol-cytochrome c oxidoreductase (cytochrome b-c1 complex, complex III, CIII), resulting in different assemblies (supercomplex SCI(1)III(2)IV(1) and megacomplex MCI(2)III(2)IV(2)). Liver specific isoform.

The protein resides in the mitochondrion inner membrane. It participates in energy metabolism; oxidative phosphorylation. Its function is as follows. Component of the cytochrome c oxidase, the last enzyme in the mitochondrial electron transport chain which drives oxidative phosphorylation. The respiratory chain contains 3 multisubunit complexes succinate dehydrogenase (complex II, CII), ubiquinol-cytochrome c oxidoreductase (cytochrome b-c1 complex, complex III, CIII) and cytochrome c oxidase (complex IV, CIV), that cooperate to transfer electrons derived from NADH and succinate to molecular oxygen, creating an electrochemical gradient over the inner membrane that drives transmembrane transport and the ATP synthase. Cytochrome c oxidase is the component of the respiratory chain that catalyzes the reduction of oxygen to water. Electrons originating from reduced cytochrome c in the intermembrane space (IMS) are transferred via the dinuclear copper A center (CU(A)) of subunit 2 and heme A of subunit 1 to the active site in subunit 1, a binuclear center (BNC) formed by heme A3 and copper B (CU(B)). The BNC reduces molecular oxygen to 2 water molecules unsing 4 electrons from cytochrome c in the IMS and 4 protons from the mitochondrial matrix. In Canis lupus familiaris (Dog), this protein is Cytochrome c oxidase subunit 6A1, mitochondrial (COX6A1).